A 415-amino-acid chain; its full sequence is Histidine--tRNA ligase (415 aa).

The protein belongs to the class-II aminoacyl-tRNA synthetase family. As to quaternary structure, homodimer.

Its subcellular location is the cytoplasm. The enzyme catalyses tRNA(His) + L-histidine + ATP = L-histidyl-tRNA(His) + AMP + diphosphate + H(+). In Gluconobacter oxydans (strain 621H) (Gluconobacter suboxydans), this protein is Histidine--tRNA ligase.